Consider the following 616-residue polypeptide: Protein phosphatase EYA4 (616 aa).

Met1 carries the post-translational modification N-acetylmethionine. Disordered stretches follow at residues 1 to 66 (MEDT…VTTN), 186 to 211 (SQTQ…PGQT), and 277 to 345 (ADGT…DSDL). Glycyl lysine isopeptide (Lys-Gly) (interchain with G-Cter in SUMO2) cross-links involve residues Lys14 and Lys52. The segment covering 56–66 (SGLSSTSVTTN) has biased composition (low complexity). Residues 277 to 311 (ADGTSSSTSTYQLQESLQGLTSQPGEFDTVQSPST) show a composition bias toward polar residues. Ser338 is subject to Phosphoserine. The active-site Nucleophile is Asp352. Mg(2+)-binding residues include Asp352, Asp354, and Asp580. Asp354 functions as the Proton donor in the catalytic mechanism.

The protein belongs to the HAD-like hydrolase superfamily. EYA family. Interacts with SIX3; translocates EYA4 from the cytoplasm to the nucleus and promotes activation of their target genes. Mg(2+) serves as cofactor. As to expression, in the embryo, expressed mainly in the craniofacial mesenchyme, dermamyotome and limb.

It is found in the cytoplasm. The protein resides in the nucleus. The enzyme catalyses O-phospho-L-tyrosyl-[protein] + H2O = L-tyrosyl-[protein] + phosphate. Tyrosine phosphatase that specifically dephosphorylates 'Tyr-142' of histone H2AX (H2AXY142ph). 'Tyr-142' phosphorylation of histone H2AX plays a central role in DNA repair and acts as a mark that distinguishes between apoptotic and repair responses to genotoxic stress. Promotes efficient DNA repair by dephosphorylating H2AX, promoting the recruitment of DNA repair complexes containing MDC1. Its function as histone phosphatase probably explains its role in transcription regulation during organogenesis. May be involved in development of the eye. In Mus musculus (Mouse), this protein is Protein phosphatase EYA4 (Eya4).